Reading from the N-terminus, the 420-residue chain is Multifunctional CCA protein (420 aa).

The ATP site is built by Gly-8 and Arg-11. Positions 8 and 11 each coordinate CTP. The Mg(2+) site is built by Asp-21 and Asp-23. ATP contacts are provided by Arg-91, Arg-137, and Arg-140. CTP-binding residues include Arg-91, Arg-137, and Arg-140. Residues 228–334 enclose the HD domain; that stretch reads TFVHTMLVLQ…LKLFNRLDVW (107 aa).

This sequence belongs to the tRNA nucleotidyltransferase/poly(A) polymerase family. Bacterial CCA-adding enzyme type 1 subfamily. Monomer. Can also form homodimers and oligomers. Requires Mg(2+) as cofactor. It depends on Ni(2+) as a cofactor.

It carries out the reaction a tRNA precursor + 2 CTP + ATP = a tRNA with a 3' CCA end + 3 diphosphate. It catalyses the reaction a tRNA with a 3' CCA end + 2 CTP + ATP = a tRNA with a 3' CCACCA end + 3 diphosphate. Functionally, catalyzes the addition and repair of the essential 3'-terminal CCA sequence in tRNAs without using a nucleic acid template. Adds these three nucleotides in the order of C, C, and A to the tRNA nucleotide-73, using CTP and ATP as substrates and producing inorganic pyrophosphate. tRNA 3'-terminal CCA addition is required both for tRNA processing and repair. Also involved in tRNA surveillance by mediating tandem CCA addition to generate a CCACCA at the 3' terminus of unstable tRNAs. While stable tRNAs receive only 3'-terminal CCA, unstable tRNAs are marked with CCACCA and rapidly degraded. This Pasteurella multocida (strain Pm70) protein is Multifunctional CCA protein.